The primary structure comprises 514 residues: Folylpolyglutamate synthase (514 aa).

82–85 is a binding site for ATP; sequence GKGS. 3 residues coordinate Mg(2+): Ser107, Glu186, and His214. The ATP site is built by Arg339 and Asp355.

Belongs to the folylpolyglutamate synthase family. It depends on a monovalent cation as a cofactor.

Its subcellular location is the mitochondrion inner membrane. The protein localises to the mitochondrion matrix. It localises to the cytoplasm. It catalyses the reaction (6S)-5,6,7,8-tetrahydrofolyl-(gamma-L-Glu)(n) + L-glutamate + ATP = (6S)-5,6,7,8-tetrahydrofolyl-(gamma-L-Glu)(n+1) + ADP + phosphate + H(+). It functions in the pathway cofactor biosynthesis; tetrahydrofolylpolyglutamate biosynthesis. Catalyzes conversion of folates to polyglutamate derivatives allowing concentration of folate compounds in the cell and the intracellular retention of these cofactors, which are important substrates for most of the folate-dependent enzymes that are involved in one-carbon transfer reactions involved in purine, pyrimidine and amino acid synthesis. This chain is Folylpolyglutamate synthase (MET7), found in Candida albicans (Yeast).